Consider the following 311-residue polypeptide: Zeta-sarcoglycan (311 aa).

The Cytoplasmic segment spans residues 1–50; that stretch reads MDRSTDLDIQELKMTREQYILATQQNNLPRPENAQLYPVGIYGWRKRCLY. Residues 51-71 traverse the membrane as a helical; Signal-anchor for type II membrane protein segment; that stretch reads FFVLLLLVTMIVNLAMTIWIL. Over 72–311 the chain is Extracellular; that stretch reads KVMNFTVDGM…QSSSSICLWN (240 aa). N-linked (GlcNAc...) asparagine glycosylation is found at asparagine 75 and asparagine 123. Cysteine 285 and cysteine 301 are joined by a disulfide.

It belongs to the sarcoglycan beta/delta/gamma/zeta family. In terms of tissue distribution, expressed in the heart, skeletal muscle and arterial vascular smooth muscle.

The protein localises to the cell membrane. Its subcellular location is the sarcolemma. It is found in the cytoplasm. It localises to the cytoskeleton. Its function is as follows. Component of the sarcoglycan complex, a subcomplex of the dystrophin-glycoprotein complex which forms a link between the F-actin cytoskeleton and the extracellular matrix. May play a role in the maintenance of striated muscle membrane stability. The chain is Zeta-sarcoglycan (Sgcz) from Mus musculus (Mouse).